The sequence spans 197 residues: MDNLKTLVVQKRLDLGKGPNRRLHKKNLIPGIFYTSSGKNIPIQLPELPFTKIFSEVGRTTVFNLKIESDKENITHPVIIWELQYYPVKNRFMHVDLYGVELNKPIKIVVPLEFTGTAKGTKVGGKLETYREQLTLIANPLDIPSKITLDISDLDIGKSIYVADLKLPEGVKTSYDTNYAIVSVIMPGGNTATEQEG.

Belongs to the bacterial ribosomal protein bL25 family. CTC subfamily. In terms of assembly, part of the 50S ribosomal subunit; part of the 5S rRNA/L5/L18/L25 subcomplex. Contacts the 5S rRNA. Binds to the 5S rRNA independently of L5 and L18.

Its function is as follows. This is one of the proteins that binds to the 5S RNA in the ribosome where it forms part of the central protuberance. This chain is Large ribosomal subunit protein bL25, found in Lawsonia intracellularis (strain PHE/MN1-00).